A 227-amino-acid polypeptide reads, in one-letter code: Cytochrome c oxidase subunit 2 (227 aa).

Topologically, residues 1–14 (MAYPFQLGLQDATS) are mitochondrial intermembrane. A helical transmembrane segment spans residues 15-45 (PIMEELTNFHDHTLMIVFLISSLVLYIISLM). The Mitochondrial matrix portion of the chain corresponds to 46–59 (LTTKLTHTSTMDAQ). The helical transmembrane segment at 60-87 (EVETIWTILPAVILILIALPSLRILYMM) threads the bilayer. Residues 88 to 227 (DEINNPVLTV…HFENWSTSMI (140 aa)) are Mitochondrial intermembrane-facing. The Cu cation site is built by H161, C196, E198, C200, H204, and M207. E198 contributes to the Mg(2+) binding site.

Belongs to the cytochrome c oxidase subunit 2 family. Component of the cytochrome c oxidase (complex IV, CIV), a multisubunit enzyme composed of 14 subunits. The complex is composed of a catalytic core of 3 subunits MT-CO1, MT-CO2 and MT-CO3, encoded in the mitochondrial DNA, and 11 supernumerary subunits COX4I, COX5A, COX5B, COX6A, COX6B, COX6C, COX7A, COX7B, COX7C, COX8 and NDUFA4, which are encoded in the nuclear genome. The complex exists as a monomer or a dimer and forms supercomplexes (SCs) in the inner mitochondrial membrane with NADH-ubiquinone oxidoreductase (complex I, CI) and ubiquinol-cytochrome c oxidoreductase (cytochrome b-c1 complex, complex III, CIII), resulting in different assemblies (supercomplex SCI(1)III(2)IV(1) and megacomplex MCI(2)III(2)IV(2)). Found in a complex with TMEM177, COA6, COX18, COX20, SCO1 and SCO2. Interacts with TMEM177 in a COX20-dependent manner. Interacts with COX20. Interacts with COX16. Requires Cu cation as cofactor.

It localises to the mitochondrion inner membrane. The enzyme catalyses 4 Fe(II)-[cytochrome c] + O2 + 8 H(+)(in) = 4 Fe(III)-[cytochrome c] + 2 H2O + 4 H(+)(out). Component of the cytochrome c oxidase, the last enzyme in the mitochondrial electron transport chain which drives oxidative phosphorylation. The respiratory chain contains 3 multisubunit complexes succinate dehydrogenase (complex II, CII), ubiquinol-cytochrome c oxidoreductase (cytochrome b-c1 complex, complex III, CIII) and cytochrome c oxidase (complex IV, CIV), that cooperate to transfer electrons derived from NADH and succinate to molecular oxygen, creating an electrochemical gradient over the inner membrane that drives transmembrane transport and the ATP synthase. Cytochrome c oxidase is the component of the respiratory chain that catalyzes the reduction of oxygen to water. Electrons originating from reduced cytochrome c in the intermembrane space (IMS) are transferred via the dinuclear copper A center (CU(A)) of subunit 2 and heme A of subunit 1 to the active site in subunit 1, a binuclear center (BNC) formed by heme A3 and copper B (CU(B)). The BNC reduces molecular oxygen to 2 water molecules using 4 electrons from cytochrome c in the IMS and 4 protons from the mitochondrial matrix. In Praomys taitae (Taita hill rat), this protein is Cytochrome c oxidase subunit 2 (MT-CO2).